Reading from the N-terminus, the 428-residue chain is Histidine--tRNA ligase (428 aa).

The protein belongs to the class-II aminoacyl-tRNA synthetase family. Homodimer.

It is found in the cytoplasm. It carries out the reaction tRNA(His) + L-histidine + ATP = L-histidyl-tRNA(His) + AMP + diphosphate + H(+). This is Histidine--tRNA ligase from Lactobacillus delbrueckii subsp. bulgaricus (strain ATCC BAA-365 / Lb-18).